A 250-amino-acid polypeptide reads, in one-letter code: uncharacterized protein (250 aa).

Residues H165–L208 are a coiled coil. Residues T201 to M233 show a composition bias toward basic and acidic residues. The interval T201–P250 is disordered.

This is an uncharacterized protein from Treponema pallidum (strain Nichols).